The sequence spans 364 residues: tRNA N6-adenosine threonylcarbamoyltransferase (364 aa).

The Fe cation site is built by H115 and H119. Substrate-binding positions include 137–141 (LVSGG), D170, G183, and N288. D316 contacts Fe cation.

This sequence belongs to the KAE1 / TsaD family. It depends on Fe(2+) as a cofactor.

It is found in the cytoplasm. It catalyses the reaction L-threonylcarbamoyladenylate + adenosine(37) in tRNA = N(6)-L-threonylcarbamoyladenosine(37) in tRNA + AMP + H(+). Required for the formation of a threonylcarbamoyl group on adenosine at position 37 (t(6)A37) in tRNAs that read codons beginning with adenine. Is involved in the transfer of the threonylcarbamoyl moiety of threonylcarbamoyl-AMP (TC-AMP) to the N6 group of A37, together with TsaE and TsaB. TsaD likely plays a direct catalytic role in this reaction. This is tRNA N6-adenosine threonylcarbamoyltransferase from Bartonella tribocorum (strain CIP 105476 / IBS 506).